Reading from the N-terminus, the 101-residue chain is ACFIRNCPKGGKRNVDEGPTKPCMFCSFGQCVAPHTCCGEKGCEMGTVDANMCQEENESPIPCHVFGKRCLLNHPGNSHGNCVTYGICCSHDTCTVHLACM.

Residue Ala1 is a signal peptide. Residues Cys2 and Cys7 are joined by a disulfide bond. Gly10 is subject to Glycine amide. The propeptide occupies 11–18 (GKRNVDEG). 7 disulfide bridges follow: Cys23–Cys63, Cys26–Cys37, Cys31–Cys53, Cys38–Cys43, Cys70–Cys88, Cys82–Cys100, and Cys89–Cys94.

The protein belongs to the vasopressin/oxytocin family. As to expression, expressed by the venom gland.

It is found in the secreted. Targets vasopressin-oxytocin related receptors. Is more active on fish receptors than on their human counterparts, supporting an evolved role of this conopressin in the envenomation process. Acts as an agonist on zebrafish vasopressin receptors V1a1R (EC(50)=10.6 nM), V1a2R (EC(50)=44.06 nM, partial agonist), V2R (EC(50)=299.2 nM) and oxytocin receptor (EC(50)=353.73 nM, partial agonist). Shows a weaker activity on human receptors AVPR1B (EC(50)=51.92 nM), AVPR1A (EC(50)=123.78 nM), AVPR2 (EC(50)=299.2 nM) and oxytocin (OXTR) receptor (EC(50)=455.66 nM, partial agonist). In vivo, exhibits grooming and scratching behavior in mice, following intracerebral injection. This Conus monile (Necklace cone) protein is Conopressin/conophysin, isoform 3.